Reading from the N-terminus, the 651-residue chain is Acid beta-fructofuranosidase (651 aa).

Topologically, residues 1–23 (MEHHKPLLPTSSHAAPNPRTRKD) are cytoplasmic. Positions 1 to 103 (MEHHKPLLPT…LFSGEGGASE (103 aa)) are cleaved as a propeptide — removed in mature form. Residues 24–44 (LLLLLCALLFLSSLVAFGRNR) form a helical; Signal-anchor for type II membrane protein membrane-spanning segment. The Lumenal portion of the chain corresponds to 45 to 651 (ASNVPHDHVS…PFPFNPDQKN (607 aa)). Residues 48 to 76 (VPHDHVSSSASNHQQEHQSPTSLPSSKWH) form a disordered region. Polar residues predominate over residues 54–72 (SSSASNHQQEHQSPTSLPS). Substrate-binding positions include 127-130 (WMND), Q146, W154, and 189-190 (WT). D130 is a catalytic residue. N210 carries an N-linked (GlcNAc...) asparagine glycan. 253-254 (RD) is a binding site for substrate. The N-linked (GlcNAc...) asparagine glycan is linked to N275. Residues E308 and D343 each contribute to the substrate site. C500 and C548 are disulfide-bonded. N-linked (GlcNAc...) asparagine glycosylation is present at N620.

This sequence belongs to the glycosyl hydrolase 32 family. May be present in two forms, a 70 kDa monomer and a heterodimer of the 30 kDa and 38 kDa subunits. The ratio of the levels of the two forms within cells appears to be regulated developmentally.

The protein resides in the membrane. The protein localises to the vacuole lumen. The catalysed reaction is Hydrolysis of terminal non-reducing beta-D-fructofuranoside residues in beta-D-fructofuranosides.. It participates in glycan biosynthesis; sucrose metabolism. In Phaseolus vulgaris (Kidney bean), this protein is Acid beta-fructofuranosidase.